Consider the following 59-residue polypeptide: Large ribosomal subunit protein bL32 (59 aa).

Residues 1-28 (MAVQQNKKSPSKRGMHRAHDFLTDPPLA) are disordered.

This sequence belongs to the bacterial ribosomal protein bL32 family.

This Aromatoleum aromaticum (strain DSM 19018 / LMG 30748 / EbN1) (Azoarcus sp. (strain EbN1)) protein is Large ribosomal subunit protein bL32.